A 182-amino-acid chain; its full sequence is Putative adenylate kinase (182 aa).

Glycine 10, glycine 12, lysine 13, threonine 14, and serine 15 together coordinate ATP. The segment at 30-53 (HLNEMIKEEHLYTEVDEVRDAVIA) is NMP. Residues 104–114 (ARGYSEEKIRE) are LID. 2 residues coordinate ATP: arginine 105 and lysine 143.

Belongs to the adenylate kinase family. AK6 subfamily. As to quaternary structure, interacts with uS11. Not a structural component of 40S pre-ribosomes, but transiently interacts with them by binding to uS11.

The catalysed reaction is AMP + ATP = 2 ADP. The enzyme catalyses ATP + H2O = ADP + phosphate + H(+). Its function is as follows. Broad-specificity nucleoside monophosphate (NMP) kinase that catalyzes the reversible transfer of the terminal phosphate group between nucleoside triphosphates and monophosphates. Also has ATPase activity. Involved in the late maturation steps of the 30S ribosomal particles, specifically 16S rRNA maturation. While NMP activity is not required for ribosome maturation, ATPase activity is. Associates transiently with small ribosomal subunit protein uS11. ATP hydrolysis breaks the interaction with uS11. May temporarily remove uS11 from the ribosome to enable a conformational change of the ribosomal RNA that is needed for the final maturation step of the small ribosomal subunit. The polypeptide is Putative adenylate kinase (Methanosarcina barkeri (strain Fusaro / DSM 804)).